The chain runs to 537 residues: CTP synthase (537 aa).

The interval 1–268 (MPFKCIFLTG…STFITEKLGL (268 aa)) is amidoligase domain. Ser14 serves as a coordination point for CTP. Residue Ser14 coordinates UTP. Position 15–20 (15–20 (SLGKGL)) interacts with ATP. L-glutamine is bound at residue Tyr55. Residue Asp72 participates in ATP binding. Mg(2+) is bound by residues Asp72 and Glu142. Residues 149-151 (DIE), 188-193 (KTKPTQ), and Lys224 each bind CTP. Residues 188 to 193 (KTKPTQ) and Lys224 contribute to the UTP site. In terms of domain architecture, Glutamine amidotransferase type-1 spans 294–533 (RIGLVGKYVQ…IQAALLYSKN (240 aa)). Gly353 lines the L-glutamine pocket. Residue Cys380 is the Nucleophile; for glutamine hydrolysis of the active site. Residues 381–384 (LGMQ), Glu404, and Arg461 each bind L-glutamine. Catalysis depends on residues His506 and Glu508.

It belongs to the CTP synthase family. In terms of assembly, homotetramer.

It carries out the reaction UTP + L-glutamine + ATP + H2O = CTP + L-glutamate + ADP + phosphate + 2 H(+). The catalysed reaction is L-glutamine + H2O = L-glutamate + NH4(+). The enzyme catalyses UTP + NH4(+) + ATP = CTP + ADP + phosphate + 2 H(+). It participates in pyrimidine metabolism; CTP biosynthesis via de novo pathway; CTP from UDP: step 2/2. Its activity is regulated as follows. Allosterically activated by GTP, when glutamine is the substrate; GTP has no effect on the reaction when ammonia is the substrate. The allosteric effector GTP functions by stabilizing the protein conformation that binds the tetrahedral intermediate(s) formed during glutamine hydrolysis. Inhibited by the product CTP, via allosteric rather than competitive inhibition. Its function is as follows. Catalyzes the ATP-dependent amination of UTP to CTP with either L-glutamine or ammonia as the source of nitrogen. Regulates intracellular CTP levels through interactions with the four ribonucleotide triphosphates. The sequence is that of CTP synthase from Chlamydia caviae (strain ATCC VR-813 / DSM 19441 / 03DC25 / GPIC) (Chlamydophila caviae).